The primary structure comprises 154 residues: Transcription antitermination protein NusB (154 aa).

The protein belongs to the NusB family.

Its function is as follows. Involved in transcription antitermination. Required for transcription of ribosomal RNA (rRNA) genes. Binds specifically to the boxA antiterminator sequence of the ribosomal RNA (rrn) operons. The sequence is that of Transcription antitermination protein NusB from Hyphomonas neptunium (strain ATCC 15444).